The sequence spans 62 residues: Small ribosomal subunit protein bS21 (62 aa).

Over residues V43–A52 the composition is skewed to basic and acidic residues. Residues V43 to K62 form a disordered region. Positions R53 to K62 are enriched in basic residues.

Belongs to the bacterial ribosomal protein bS21 family.

The protein is Small ribosomal subunit protein bS21 of Lactiplantibacillus plantarum (strain ATCC BAA-793 / NCIMB 8826 / WCFS1) (Lactobacillus plantarum).